Consider the following 307-residue polypeptide: Ribosomal RNA small subunit methyltransferase H (307 aa).

Residues 38-40 (GGH), D58, F82, D99, and Q106 each bind S-adenosyl-L-methionine.

It belongs to the methyltransferase superfamily. RsmH family.

The protein resides in the cytoplasm. The catalysed reaction is cytidine(1402) in 16S rRNA + S-adenosyl-L-methionine = N(4)-methylcytidine(1402) in 16S rRNA + S-adenosyl-L-homocysteine + H(+). Specifically methylates the N4 position of cytidine in position 1402 (C1402) of 16S rRNA. The protein is Ribosomal RNA small subunit methyltransferase H of Variovorax paradoxus (strain S110).